The chain runs to 255 residues: Probable septum site-determining protein MinC (255 aa).

Over residues 103 to 115 (SHGRRPRGERSEE) the composition is skewed to basic and acidic residues. The interval 103-136 (SHGRRPRGERSEEAAEAVPAAAEPVPAPAASPAP) is disordered. Over residues 127 to 136 (VPAPAASPAP) the composition is skewed to pro residues.

Belongs to the MinC family. In terms of assembly, interacts with MinD and FtsZ.

In terms of biological role, cell division inhibitor that blocks the formation of polar Z ring septums. Rapidly oscillates between the poles of the cell to destabilize FtsZ filaments that have formed before they mature into polar Z rings. Prevents FtsZ polymerization. The chain is Probable septum site-determining protein MinC from Ralstonia nicotianae (strain ATCC BAA-1114 / GMI1000) (Ralstonia solanacearum).